Consider the following 135-residue polypeptide: Crossover junction endodeoxyribonuclease Hje (135 aa).

The Mg(2+) site is built by Glu10, Asp39, and Glu52.

Belongs to the Holliday junction resolvase Hjc family. Hje subfamily. Homodimer. Mg(2+) serves as cofactor.

It carries out the reaction Endonucleolytic cleavage at a junction such as a reciprocal single-stranded crossover between two homologous DNA duplexes (Holliday junction).. A structure-specific endonuclease that resolves Holliday junction (HJ) intermediates during genetic recombination. Acts only on 4-way DNA junctions in a sequence non-specific manner; introduces paired nicks in opposing strands 2 bases 3' of the point of strand exchange only on continuous strands of 4-way junction DNA. Cleaves both mobile and immobile junctions. Plays a more direct role in DNA repair than Hjc. Overexpression of this protein decreases the growth rate, and leads to genomic instability, and global transcriptomic changes. This is Crossover junction endodeoxyribonuclease Hje from Saccharolobus islandicus (strain REY15A) (Sulfolobus islandicus).